Here is a 508-residue protein sequence, read N- to C-terminus: Protein DETOXIFICATION 52 (508 aa).

The next 12 helical transmembrane spans lie at 48-68, 78-98, 122-142, 156-176, 189-209, 222-242, 270-290, 300-320, 341-361, 368-388, 415-437, and 441-463; these read ILAA…LGHI, LAIA…ALGM, VLFL…LGKI, AQTY…LHPL, LTLA…FLVS, AAAS…IAGL, IGVC…GLLI, GILI…GLAV, IVAV…AWGV, IFTN…ILGL, INLG…WAAY, and GLWV…VVAT.

This sequence belongs to the multi antimicrobial extrusion (MATE) (TC 2.A.66.1) family. In terms of tissue distribution, detected in the part of the veins in cotyledons of 6-day-old seedlings and the basal parts of the petioles in older plants. Highly expressed in the vascular tissues of hypocotyl in dark-grown seedlings.

It is found in the late endosome membrane. Its function is as follows. May act as a negative regulator of hypocotyl cell elongation in the light. The polypeptide is Protein DETOXIFICATION 52 (Arabidopsis thaliana (Mouse-ear cress)).